A 441-amino-acid chain; its full sequence is Methionine aminopeptidase 2A (441 aa).

The disordered stretch occupies residues 1–103 (MAIGNPEVAT…SGDFPQGEIQ (103 aa)). Positions 18–33 (AESSNGNESQLSSDLT) are enriched in polar residues. Basic and acidic residues predominate over residues 37–62 (DLAEVKEDEKDNNQEEEDGLKAEAST). Residues 63-76 (KKKKKKSKSKKKKS) are compositionally biased toward basic residues. Position 194 (H194) interacts with substrate. D214, D225, and H294 together coordinate a divalent metal cation. H302 is a binding site for substrate. E327 and E422 together coordinate a divalent metal cation.

It belongs to the peptidase M24A family. Methionine aminopeptidase eukaryotic type 2 subfamily. It depends on Co(2+) as a cofactor. Zn(2+) is required as a cofactor. The cofactor is Mn(2+). Requires Fe(2+) as cofactor. Ubiquitous. Preferentially expressed in roots.

The protein localises to the cytoplasm. It catalyses the reaction Release of N-terminal amino acids, preferentially methionine, from peptides and arylamides.. Its function is as follows. Cotranslationally removes the N-terminal methionine from nascent proteins. The N-terminal methionine is often cleaved when the second residue in the primary sequence is small and uncharged (Met-Ala-, Cys, Gly, Pro, Ser, Thr, or Val). The chain is Methionine aminopeptidase 2A from Arabidopsis thaliana (Mouse-ear cress).